A 217-amino-acid polypeptide reads, in one-letter code: 3,4-dihydroxy-2-butanone 4-phosphate synthase (217 aa).

D-ribulose 5-phosphate is bound by residues 37–38 (RE), aspartate 42, 150–154 (RGGHT), and glutamate 174. Glutamate 38 is a binding site for Mg(2+). Histidine 153 contributes to the Mg(2+) binding site.

It belongs to the DHBP synthase family. In terms of assembly, homodimer. The cofactor is Mg(2+). It depends on Mn(2+) as a cofactor.

It catalyses the reaction D-ribulose 5-phosphate = (2S)-2-hydroxy-3-oxobutyl phosphate + formate + H(+). Its pathway is cofactor biosynthesis; riboflavin biosynthesis; 2-hydroxy-3-oxobutyl phosphate from D-ribulose 5-phosphate: step 1/1. Its function is as follows. Catalyzes the conversion of D-ribulose 5-phosphate to formate and 3,4-dihydroxy-2-butanone 4-phosphate. This is 3,4-dihydroxy-2-butanone 4-phosphate synthase from Salmonella arizonae (strain ATCC BAA-731 / CDC346-86 / RSK2980).